Consider the following 66-residue polypeptide: Alpha-like toxin Bom3 (66 aa).

The LCN-type CS-alpha/beta domain occupies 2 to 66 (RDGYIAQPEN…PIVVGGEKCH (65 aa)). 4 disulfide bridges follow: cysteine 12–cysteine 65, cysteine 16–cysteine 37, cysteine 23–cysteine 47, and cysteine 27–cysteine 49.

It belongs to the long (4 C-C) scorpion toxin superfamily. Sodium channel inhibitor family. Alpha subfamily. Expressed by the venom gland.

The protein localises to the secreted. Its function is as follows. Alpha toxins bind voltage-independently at site-3 of sodium channels (Nav) and inhibit the inactivation of the activated channels, thereby blocking neuronal transmission. As it competes neither with the classical alpha-toxin AaH2 nor the beta-toxin Css2, this toxin is an alpha-like toxin. The polypeptide is Alpha-like toxin Bom3 (Buthus occitanus mardochei (Moroccan scorpion)).